We begin with the raw amino-acid sequence, 221 residues long: U1 small nuclear ribonucleoprotein C (221 aa).

Residues 4–36 form a Matrin-type zinc finger; it reads HYCDYCDVFLTHDSVSVRKAHNSGRNHLQNVRE. The segment at 80–221 is disordered; the sequence is GAGPLSGSSD…PHSRTGYGPR (142 aa). A compositionally biased stretch (pro residues) spans 142–158; that stretch reads YSRPPPQGGPYSRPPPD. The segment covering 178-190 has biased composition (low complexity); the sequence is PLGYGAPLPGAYP. Residues 191–204 show a composition bias toward pro residues; it reads SGPPPNMRGPPPPL.

This sequence belongs to the U1 small nuclear ribonucleoprotein C family. U1 snRNP is composed of the 7 core Sm proteins B/B', D1, D2, D3, E, F and G that assemble in a heptameric protein ring on the Sm site of the small nuclear RNA to form the core snRNP, and at least 3 U1 snRNP-specific proteins U1-70K, U1-A and U1-C. U1-C interacts with U1 snRNA and the 5' splice-site region of the pre-mRNA.

The protein resides in the nucleus. Component of the spliceosomal U1 snRNP, which is essential for recognition of the pre-mRNA 5' splice-site and the subsequent assembly of the spliceosome. U1-C is directly involved in initial 5' splice-site recognition for both constitutive and regulated alternative splicing. The interaction with the 5' splice-site seems to precede base-pairing between the pre-mRNA and the U1 snRNA. Stimulates commitment or early (E) complex formation by stabilizing the base pairing of the 5' end of the U1 snRNA and the 5' splice-site region. The protein is U1 small nuclear ribonucleoprotein C of Mycosarcoma maydis (Corn smut fungus).